Consider the following 204-residue polypeptide: Small ribosomal subunit protein eS8 (204 aa).

It belongs to the eukaryotic ribosomal protein eS8 family.

The chain is Small ribosomal subunit protein eS8 (RPS8) from Griffithsia japonica (Red alga).